A 457-amino-acid polypeptide reads, in one-letter code: Protein PIN-LIKES 2 (457 aa).

Over M1 to D15 the chain is Lumenal. The chain crosses the membrane as a helical span at residues I16–L36. The Cytoplasmic segment spans residues A37–K54. Residues L55 to L75 traverse the membrane as a helical segment. At D76–P85 the chain is on the lumenal side. A helical transmembrane segment spans residues V86–C106. At R107–T116 the chain is on the cytoplasmic side. A helical transmembrane segment spans residues I117 to C137. The Lumenal portion of the chain corresponds to H138–R151. Residues G152–Y172 form a helical membrane-spanning segment. Residues H173–T291 lie on the Cytoplasmic side of the membrane. Residues I292–G312 traverse the membrane as a helical segment. Over Y313–D322 the chain is Lumenal. Residues S323 to L343 traverse the membrane as a helical segment. Residues S344–T356 are Cytoplasmic-facing. The helical transmembrane segment at T357 to M377 threads the bilayer. The Lumenal segment spans residues S378–K393. The helical transmembrane segment at F394–L414 threads the bilayer. The Cytoplasmic segment spans residues R415–A424. A helical transmembrane segment spans residues L425–F445. The Lumenal segment spans residues K446 to Q457.

This sequence belongs to the auxin efflux carrier (TC 2.A.69.2) family. As to expression, expressed in seedlings, rosette and cauline leaves, flowers and siliques.

It localises to the endoplasmic reticulum membrane. Involved in cellular auxin homeostasis by regulating auxin metabolism. Regulates intracellular auxin accumulation at the endoplasmic reticulum and thus auxin availability for nuclear auxin signaling. This is Protein PIN-LIKES 2 from Arabidopsis thaliana (Mouse-ear cress).